A 341-amino-acid chain; its full sequence is MKVKDFDFYLPEELIAQHPMEKRDEARLLVLDKETGEIEHKIFKDILDYLTPNDCLVLNNTRVLPARLIGSKEETGGKMEFLLLKRKEKDVWETLVKPGKRAQIGARFIFGNGELEAEVIGMGEEGSRIVKFYYEGIFEEILDQLGQMPLPPYIKEKLDDKEMYQTVYSKEEGSAAAPTAGLHFTEELLKKIEEKGVKLAFLTLHVGLGTFRPVKVEDIQEHVMHSEYYKMDKKTAEIINDTKENGGRVIAVGTTSCRTLETIGDIEGKVGEQSGWTDIFIYPGYKYKVVDALITNFHLPQSTLLMLVSALAGRDNIMNAYNVAVEKEYRFFSFGDAMFIK.

It belongs to the QueA family. Monomer.

The protein resides in the cytoplasm. It carries out the reaction 7-aminomethyl-7-carbaguanosine(34) in tRNA + S-adenosyl-L-methionine = epoxyqueuosine(34) in tRNA + adenine + L-methionine + 2 H(+). Its pathway is tRNA modification; tRNA-queuosine biosynthesis. Functionally, transfers and isomerizes the ribose moiety from AdoMet to the 7-aminomethyl group of 7-deazaguanine (preQ1-tRNA) to give epoxyqueuosine (oQ-tRNA). The polypeptide is S-adenosylmethionine:tRNA ribosyltransferase-isomerase (Clostridium botulinum (strain Langeland / NCTC 10281 / Type F)).